The primary structure comprises 173 residues: Small ribosomal subunit protein uS10m (173 aa).

The protein belongs to the universal ribosomal protein uS10 family. Component of the mitochondrial ribosome small subunit (28S) which comprises a 12S rRNA and about 30 distinct proteins.

Its subcellular location is the mitochondrion. This Drosophila melanogaster (Fruit fly) protein is Small ribosomal subunit protein uS10m (mRpS10).